The following is a 198-amino-acid chain: Dephospho-CoA kinase (198 aa).

The DPCK domain maps to 4–198; sequence IIGITGGIAS…DSQLRRLQNE (195 aa). 12-17 serves as a coordination point for ATP; the sequence is ASGKST.

The protein belongs to the CoaE family.

It localises to the cytoplasm. The catalysed reaction is 3'-dephospho-CoA + ATP = ADP + CoA + H(+). The protein operates within cofactor biosynthesis; coenzyme A biosynthesis; CoA from (R)-pantothenate: step 5/5. Catalyzes the phosphorylation of the 3'-hydroxyl group of dephosphocoenzyme A to form coenzyme A. The chain is Dephospho-CoA kinase from Streptococcus mutans serotype c (strain ATCC 700610 / UA159).